The following is a 492-amino-acid chain: Histone-lysine N-methyltransferase SUVR4 (492 aa).

The disordered stretch occupies residues 112 to 138 (ETRSASSGSSIQVVQKQPQLSNGDRKR). A compositionally biased stretch (polar residues) spans 113 to 133 (TRSASSGSSIQVVQKQPQLSN). Residues Cys196, Cys197, Cys200, Cys204, Cys213, Cys281, Cys285, Cys287, and Cys291 each contribute to the Zn(2+) site. One can recognise a Pre-SET domain in the interval 196–299 (CCANCKGNCL…QCGNRVVQRG (104 aa)). The SET domain maps to 302–435 (CQLQVYFTQE…AMDELTWDYM (134 aa)). Residues 313-315 (KGW) and 391-392 (NH) each bind S-adenosyl-L-methionine. Cys394 contributes to the Zn(2+) binding site. Tyr434 provides a ligand contact to S-adenosyl-L-methionine. The region spanning 446–462 (KAFRCCCGSESCRDRKI) is the Post-SET domain. Zn(2+) is bound by residues Cys450, Cys452, and Cys457. Positions 463-492 (KGSQGKSIERRKIVSAKKQQGSKEVSKKRK) are disordered.

This sequence belongs to the class V-like SAM-binding methyltransferase superfamily. Histone-lysine methyltransferase family. As to quaternary structure, interacts with ubiquitin.

The protein localises to the nucleus. Its subcellular location is the chromosome. It catalyses the reaction N(6)-methyl-L-lysyl(9)-[histone H3] + S-adenosyl-L-methionine = N(6),N(6)-dimethyl-L-lysyl(9)-[histone H3] + S-adenosyl-L-homocysteine + H(+). The catalysed reaction is N(6),N(6)-dimethyl-L-lysyl(9)-[histone H3] + S-adenosyl-L-methionine = N(6),N(6),N(6)-trimethyl-L-lysyl(9)-[histone H3] + S-adenosyl-L-homocysteine + H(+). In terms of biological role, histone methyltransferase that converts monomethylated 'Lys-9' of histone H3 (H3K9me1) to dimethylated 'Lys-9' (H3K9me2) in the absence of bound ubiquitin, and to trimethylated 'Lys-9' (H3K9me3) in the presence of bound ubiquitin. Acts in a locus-specific manner and contributes to the transcriptional silencing of pseudogenes and transposons. H3 'Lys-9' methylation represents a specific tag for epigenetic transcriptional repression. The chain is Histone-lysine N-methyltransferase SUVR4 (SUVR4) from Arabidopsis thaliana (Mouse-ear cress).